A 344-amino-acid polypeptide reads, in one-letter code: MPNCFKFHTVIERHWQKPYPVLSFLLKPLSGLFAKIAAKRRTDFLSGKRQSEKLPVPVVVVGNIHAGGTGKTPIVAALVSGLQEKGVKVGIISRGYGRKSKAVHVLNAESRAEDAGDEPLLLFRKTGAPTAVGSSRAEAGRALLAAHPDIGLIVADDGLQHYALRRDVEIAVFPAADTGRTDLDLLPNGNLREPLLRLDSVDAVVVSGGKADALFRPSENMFHSRIEAGRIYRLNNPSEILDTGRLKNQTVVAVAGIAKPARFFDSLRNMGITVKRTVALPDHADISAADLPDADAVIITEKDAVKFSDGICTDNVWVLPVCAIIEPDLAAFVLERLEDVPKAV.

Histidine 65 to threonine 72 provides a ligand contact to ATP.

Belongs to the LpxK family.

It catalyses the reaction a lipid A disaccharide + ATP = a lipid IVA + ADP + H(+). It participates in glycolipid biosynthesis; lipid IV(A) biosynthesis; lipid IV(A) from (3R)-3-hydroxytetradecanoyl-[acyl-carrier-protein] and UDP-N-acetyl-alpha-D-glucosamine: step 6/6. Functionally, transfers the gamma-phosphate of ATP to the 4'-position of a tetraacyldisaccharide 1-phosphate intermediate (termed DS-1-P) to form tetraacyldisaccharide 1,4'-bis-phosphate (lipid IVA). This chain is Tetraacyldisaccharide 4'-kinase, found in Neisseria meningitidis serogroup A / serotype 4A (strain DSM 15465 / Z2491).